The primary structure comprises 2919 residues: Cadherin EGF LAG seven-pass G-type receptor 2 (2919 aa).

The first 31 residues, 1–31, serve as a signal peptide directing secretion; sequence MRSRAASAPLPTPLLPLLLLLLLLPPSPLLG. Over 32–2380 the chain is Extracellular; that stretch reads DQVGPCRSLG…GEILPLKTLT (2349 aa). The interval 156 to 194 is disordered; that stretch reads LRAGEGSPEESLGGRRKRNVNTAPQFQPPSYQATVPENQ. Residues 175–194 show a composition bias toward polar residues; it reads VNTAPQFQPPSYQATVPENQ. 9 consecutive Cadherin domains span residues 182–289, 290–399, 400–505, 506–610, 611–712, 713–815, 816–921, 922–1023, and 1028–1146; these read QPPS…DPVF, EQQE…APQF, SEKR…APIF, VSTP…NPTF, TQPE…RPVF, QSSH…APQF, LRDS…PPVF, EQDE…PPVL, and ILFN…SPLL. Asparagine 486, asparagine 557, and asparagine 701 each carry an N-linked (GlcNAc...) asparagine glycan. Asparagine 1036, asparagine 1076, asparagine 1182, and asparagine 1212 each carry an N-linked (GlcNAc...) asparagine glycan. In terms of domain architecture, EGF-like 1; atypical spans 1228-1286; sequence DDNICLREPCENYMRCVSVLRFDSSAPFIASSSVLFRPIHPVGGLRCRCPPGFTGDYCE. Residues 1288–1318 form the EGF-like 2; calcium-binding domain; sequence EVDLCYSRPCGPHGRCRSREGGYTCLCLDGY. 6 cysteine pairs are disulfide-bonded: cysteine 1292-cysteine 1303, cysteine 1297-cysteine 1312, cysteine 1314-cysteine 1323, cysteine 1332-cysteine 1343, cysteine 1337-cysteine 1353, and cysteine 1355-cysteine 1365. The EGF-like 3; calcium-binding domain occupies 1328-1366; sequence HSGRCTPGVCKNGGTCVNLLVGGFKCDCPSGDFEKPFCQ. Positions 1367-1571 constitute a Laminin G-like 1 domain; sequence VTTRSFPARS…IANNGTVPGC (205 aa). Residues asparagine 1501 and asparagine 1565 are each glycosylated (N-linked (GlcNAc...) asparagine). 4 disulfide bridges follow: cysteine 1545/cysteine 1571, cysteine 1578/cysteine 1589, cysteine 1583/cysteine 1598, and cysteine 1600/cysteine 1609. The 37-residue stretch at 1574–1610 folds into the EGF-like 4; calcium-binding domain; it reads KKIVCDSSICHNGGTCVNQWNAFSCECPLGFGGKSCA. Position 1591 is a (3R)-3-hydroxyasparagine (asparagine 1591). Residues 1614–1791 form the Laminin G-like 2 domain; sequence ANPQRFLGSS…GESINVEPGC (178 aa). Residue asparagine 1741 is glycosylated (N-linked (GlcNAc...) asparagine). Positions 1787–1829 constitute an EGF-like 5; calcium-binding domain; that stretch reads VEPGCSWPDPCDSNPCPTNSYCSNDWDSYSCSCVLGYYGDNCT. 13 disulfides stabilise this stretch: cysteine 1791-cysteine 1802, cysteine 1797-cysteine 1817, cysteine 1819-cysteine 1828, cysteine 1832-cysteine 1843, cysteine 1837-cysteine 1855, cysteine 1857-cysteine 1866, cysteine 1887-cysteine 1899, cysteine 1889-cysteine 1906, cysteine 1908-cysteine 1921, cysteine 1924-cysteine 1936, cysteine 1926-cysteine 1943, cysteine 1945-cysteine 1954, and cysteine 1957-cysteine 1969. N-linked (GlcNAc...) asparagine glycosylation is present at asparagine 1827. The 38-residue stretch at 1830–1867 folds into the EGF-like 6; calcium-binding domain; it reads NVCDLNPCEHQSVCTRKPNTPHGYICECLPNYLGPYCE. One can recognise an EGF-like 7; calcium-binding domain in the interval 1883 to 1922; sequence TCGPCNCDVSKGFDPDCNKTSGECHCKENHYRPPGSPTCL. A glycan (N-linked (GlcNAc...) asparagine) is linked at asparagine 1900. The Laminin EGF-like domain maps to 1924 to 1971; it reads CDCYPTGSLSRVCDPEDGQCPCKPGVIGRQCDRCDNPFAEVTTNGCEV. Asparagine 2024, asparagine 2043, and asparagine 2061 each carry an N-linked (GlcNAc...) asparagine glycan. The GAIN-B domain occupies 2199-2369; it reads ETTVILPESV…AVLMDMSRRE (171 aa). The interval 2216–2241 is disordered; the sequence is VRSAGPGEAQETEELARRQRRHPELS. Intrachain disulfides connect cysteine 2319–cysteine 2351 and cysteine 2339–cysteine 2353. The interval 2319–2369 is GPS; sequence CVFWNHSILVSGTGGWSARGCEVVFRNESHVSCQCNHMTSFAVLMDMSRRE. Residues asparagine 2323 and asparagine 2345 are each glycosylated (N-linked (GlcNAc...) asparagine). The chain crosses the membrane as a helical span at residues 2381 to 2401; it reads YVALGVTLAALMLTFLFLTLL. Residues 2402–2413 are Cytoplasmic-facing; it reads RALRSNQHGIRR. Residues 2414–2433 traverse the membrane as a helical segment; the sequence is NLTAALGLAQLVFLLGINQA. Over 2434–2438 the chain is Extracellular; sequence DLPFA. A helical transmembrane segment spans residues 2439-2459; the sequence is CTVIAILLHFLYLCTFSWALL. The Cytoplasmic segment spans residues 2460-2480; that stretch reads EALHLYRALTEVRDVNASPMR. A helical transmembrane segment spans residues 2481 to 2501; that stretch reads FYYMLGWGVPAFITGLAVGLD. Residues 2502-2518 are Extracellular-facing; that stretch reads PEGYGNPDFCWLSVYDT. A helical transmembrane segment spans residues 2519–2539; the sequence is LIWSFAGPVAFAVSMSVFLYI. The Cytoplasmic segment spans residues 2540–2563; that stretch reads LSARASCAAQRQGFEKKGPVSGLR. A helical transmembrane segment spans residues 2564 to 2584; it reads SSFTVLLLLSATWLLALLSVN. At 2585–2591 the chain is on the extracellular side; that stretch reads SDTLLFH. Residues 2592 to 2612 traverse the membrane as a helical segment; that stretch reads YLFAACNCVQGPFIFLSYVVL. Topologically, residues 2613–2919 are cytoplasmic; that stretch reads SKEVRKALKF…SEFLFFNFLH (307 aa). Residues 2690–2884 are disordered; that stretch reads LNPGQVPPGL…PPRPPPRQSL (195 aa). Residues 2718–2730 show a composition bias toward acidic residues; it reads TDSDSDLSLEDDQ. Residues 2791–2800 show a composition bias toward polar residues; it reads GTTTKENSGS. Over residues 2803-2815 the composition is skewed to basic and acidic residues; that stretch reads LEERPRENGDALT. Positions 2857-2868 are enriched in low complexity; sequence GTGSSRGSSISE.

It belongs to the G-protein coupled receptor 2 family. LN-TM7 subfamily. As to quaternary structure, heterodimer of 2 chains generated by proteolytic processing; the large extracellular N-terminal fragment and the membrane-bound C-terminal fragment predominantly remain associated and non-covalently linked. Post-translationally, the iron and 2-oxoglutarate dependent 3-hydroxylation of aspartate and asparagine is (R) stereospecific within EGF domains. Autoproteolytically processed at the GPS region of the GAIN-B domain; this cleavage modulates receptor activity. In terms of tissue distribution, expressed in the CNS and in the eye.

The protein resides in the cell membrane. In terms of biological role, receptor that may have an important role in cell/cell signaling during nervous system formation. This Mus musculus (Mouse) protein is Cadherin EGF LAG seven-pass G-type receptor 2.